The chain runs to 348 residues: Nuclear receptor subfamily 1 group I member 3 (348 aa).

Residues 8-83 constitute a DNA-binding region (nuclear receptor); sequence PRSCMVCGDR…AGMKKEMILS (76 aa). The NR C4-type zinc finger occupies 11–31; sequence CMVCGDRATGYHFHALTCEGC. Position 38 is a phosphothreonine; by PKC (Thr38). The NR C4-type zinc-finger motif lies at 47-71; sequence CPFAGSCKVNKAQRRHCPACRLQKC. Residues 109-348 form the NR LBD domain; it reads GQQELVQTLL…MMPLLQEICS (240 aa).

The protein belongs to the nuclear hormone receptor family. NR1 subfamily. As to quaternary structure, heterodimer of NR1I3 and RXR. Interacts with PSMC4. Interacts with ECT2. Directly interacts with DNAJC7; this complex may also include HSP90. Interacts with CRY1. Interacts with CRY2 in a ligand-dependent manner. Post-translationally, phosphorylated at Thr-38 by PKC, dephosphorylation of Thr-38 is required for nuclear translocation and activation.

It localises to the nucleus. The protein localises to the cytoplasm. The protein resides in the cytoskeleton. Its function is as follows. Binds and transactivates the retinoic acid response elements that control expression of the retinoic acid receptor beta 2 and alcohol dehydrogenase 3 genes. Transactivates both the phenobarbital responsive element module of the human CYP2B6 gene and the CYP3A4 xenobiotic response element. The polypeptide is Nuclear receptor subfamily 1 group I member 3 (NR1I3) (Pusa sibirica (Baikal seal)).